A 576-amino-acid polypeptide reads, in one-letter code: (E,E)-alpha-farnesene synthase (576 aa).

The (2E,6E)-farnesyl diphosphate site is built by R289, D326, D330, R468, and N471. 2 residues coordinate Mg(2+): D326 and D330. Positions 326–330 (DDVYD) match the DDXXD motif motif. Mg(2+) contacts are provided by N471, T475, and E479. Residues D484 and S487 each coordinate K(+).

This sequence belongs to the terpene synthase family. Tpsb subfamily. As to quaternary structure, monomer. Requires Mg(2+) as cofactor. Mn(2+) serves as cofactor. It depends on K(+) as a cofactor.

It localises to the cytoplasm. It carries out the reaction (2E,6E)-farnesyl diphosphate = (3E,6E)-alpha-farnesene + diphosphate. In terms of biological role, sesquiterpene synthase catalyzing the production of (E,E)-alpha-farnesene, the predominant terpene produced during storage of fruits. Produces all six isomers (E,E)-alpha-farnesene, (Z,E)-alpha-farnesene, (E,Z)-alpha-farnesene, (Z,Z)-alpha-farnesene, (E)-beta-farnesene and (Z)-beta-farnesene from a mix of isomeric forms of the farnesyl diphosphate precursor. Able to convert geranyl diphosphate to the monoterpenes (E)-beta-ocimene, linalool and beta-myrcene. Also has a prenyltransferase activity producing alpha-farnesene directly from geranyl diphosphate and isoprenyl diphosphate. This Malus domestica (Apple) protein is (E,E)-alpha-farnesene synthase (AFS1).